A 645-amino-acid polypeptide reads, in one-letter code: Threonine--tRNA ligase (645 aa).

A TGS domain is found at 1-61 (MPAITLPDGS…SSDASVKFIT (61 aa)). A catalytic region spans residues 243–536 (DHRRIGREMD…LIEQYAGKFP (294 aa)). Zn(2+)-binding residues include cysteine 336, histidine 387, and histidine 513.

It belongs to the class-II aminoacyl-tRNA synthetase family. As to quaternary structure, homodimer. Requires Zn(2+) as cofactor.

It is found in the cytoplasm. It carries out the reaction tRNA(Thr) + L-threonine + ATP = L-threonyl-tRNA(Thr) + AMP + diphosphate + H(+). In terms of biological role, catalyzes the attachment of threonine to tRNA(Thr) in a two-step reaction: L-threonine is first activated by ATP to form Thr-AMP and then transferred to the acceptor end of tRNA(Thr). Also edits incorrectly charged L-seryl-tRNA(Thr). This is Threonine--tRNA ligase from Gluconobacter oxydans (strain 621H) (Gluconobacter suboxydans).